Here is a 603-residue protein sequence, read N- to C-terminus: DNA mismatch repair protein MutL (603 aa).

The protein belongs to the DNA mismatch repair MutL/HexB family.

Its function is as follows. This protein is involved in the repair of mismatches in DNA. It is required for dam-dependent methyl-directed DNA mismatch repair. May act as a 'molecular matchmaker', a protein that promotes the formation of a stable complex between two or more DNA-binding proteins in an ATP-dependent manner without itself being part of a final effector complex. The polypeptide is DNA mismatch repair protein MutL (Listeria monocytogenes serotype 4a (strain HCC23)).